Here is a 400-residue protein sequence, read N- to C-terminus: FPYQGSSIILESGNVNDYEVVYPRKVTALPKGAVQQKYEDAMQYEFKVNGEPVVLHLEKNKGLFSKDYSEIHYSPDGRRITTHPLVEDHCYYRGHIRNDADSTASISACNGLKGHFKLRGETYLIEPMKISNSEAHAVYKYENVEKEDEAHKMCGVTQNWESYEPIKKASQLIVSTEFQKYMEIVIVVDHSMYTKHKGDSDKIKAWVYEMINTISESYRYLYIDIIVSALEMWSEKDLINVETSAENTLKSFGEWRAKDLIHRISHDNAQLLTATDFDGPTIGLAYVASMCDPKRSVGVVQDHSSVNHLVAITLAHEIAHNLGVHHDKSSCSCGSGYTCIMSPVINSEVIKYFSDCSYIQCREYISKENPPCILNKPLRTDTVSTPVSGNELLEAGKDYD.

Residues 1–6 (FPYQGS) form the signal peptide. A propeptide spanning residues 7-176 (SIILESGNVN…KKASQLIVST (170 aa)) is cleaved from the precursor. Residues 180-377 (KYMEIVIVVD…ENPPCILNKP (198 aa)) form the Peptidase M12B domain. The Ca(2+) site is built by Glu-183 and Asp-267. 3 disulfide bridges follow: Cys-291–Cys-372, Cys-331–Cys-356, and Cys-333–Cys-339. His-316 contacts Zn(2+). Glu-317 is an active-site residue. Residues His-320 and His-326 each coordinate Zn(2+). Positions 372, 375, 387, 390, 392, 394, and 400 each coordinate Ca(2+). A propeptide spanning residues 378–400 (LRTDTVSTPVSGNELLEAGKDYD) is cleaved from the precursor.

The protein belongs to the venom metalloproteinase (M12B) family. P-I subfamily. Monomer. Zn(2+) serves as cofactor. As to expression, expressed by the venom gland.

The protein localises to the secreted. Its function is as follows. Snake venom metalloproteinase that impairs hemostasis in the envenomed animal. In Deinagkistrodon acutus (Hundred-pace snake), this protein is Snake venom metalloproteinase H3.